Here is a 118-residue protein sequence, read N- to C-terminus: Large ribosomal subunit protein bL20 (118 aa).

The protein belongs to the bacterial ribosomal protein bL20 family.

Binds directly to 23S ribosomal RNA and is necessary for the in vitro assembly process of the 50S ribosomal subunit. It is not involved in the protein synthesizing functions of that subunit. This chain is Large ribosomal subunit protein bL20, found in Hydrogenovibrio crunogenus (strain DSM 25203 / XCL-2) (Thiomicrospira crunogena).